A 90-amino-acid chain; its full sequence is MQAFNTDVRNRIIKLVKGILEQNALAADVTPQAKLVDVGLTSMDMVNLMLGVEAEFDFTIPQSEITPENFQSVETLERMVMTQLQPATAA.

In terms of domain architecture, Carrier spans 6–84 (TDVRNRIIKL…TLERMVMTQL (79 aa)). The residue at position 42 (Ser-42) is an O-(pantetheine 4'-phosphoryl)serine.

In terms of processing, 4'-phosphopantetheine is transferred from CoA to a specific serine of the apo-form of this carrier protein.

Functionally, aminoacyl carrier protein. Can be charged with L-glycine via the formation of a thioester bond between the amino acid and the 4'-phosphopantetheinyl prosthetic group, catalyzed by the bll0957 ligase. This is Aminoacyl carrier protein 1 from Bradyrhizobium diazoefficiens (strain JCM 10833 / BCRC 13528 / IAM 13628 / NBRC 14792 / USDA 110).